The following is a 561-amino-acid chain: DNA ligase (561 aa).

ATP is bound at residue E253. K255 (N6-AMP-lysine intermediate) is an active-site residue. R260, R275, E304, F344, R421, and K427 together coordinate ATP.

The protein belongs to the ATP-dependent DNA ligase family. The cofactor is Mg(2+).

The catalysed reaction is ATP + (deoxyribonucleotide)n-3'-hydroxyl + 5'-phospho-(deoxyribonucleotide)m = (deoxyribonucleotide)n+m + AMP + diphosphate.. Functionally, DNA ligase that seals nicks in double-stranded DNA during DNA replication, DNA recombination and DNA repair. In Halobacterium salinarum (strain ATCC 29341 / DSM 671 / R1), this protein is DNA ligase.